We begin with the raw amino-acid sequence, 219 residues long: 2-C-methyl-D-erythritol 4-phosphate cytidylyltransferase (219 aa).

The protein belongs to the IspD/TarI cytidylyltransferase family. IspD subfamily.

It catalyses the reaction 2-C-methyl-D-erythritol 4-phosphate + CTP + H(+) = 4-CDP-2-C-methyl-D-erythritol + diphosphate. It participates in isoprenoid biosynthesis; isopentenyl diphosphate biosynthesis via DXP pathway; isopentenyl diphosphate from 1-deoxy-D-xylulose 5-phosphate: step 2/6. Its function is as follows. Catalyzes the formation of 4-diphosphocytidyl-2-C-methyl-D-erythritol from CTP and 2-C-methyl-D-erythritol 4-phosphate (MEP). In Endomicrobium trichonymphae, this protein is 2-C-methyl-D-erythritol 4-phosphate cytidylyltransferase.